We begin with the raw amino-acid sequence, 583 residues long: 15-cis-phytoene desaturase, chloroplastic/chromoplastic (583 aa).

The transit peptide at 1 to 111 directs the protein to the chloroplast and chromoplast; sequence MPQIGLVSAV…FRASPRPTKP (111 aa). FAD-binding positions include 118–134, 141–142, Lys-149, 166–167, and Tyr-172; these read GAGLGGLSTAKYLADAG, EA, and HI. Substrate is bound at residue Arg-307. 2 residues coordinate FAD: Ile-349 and Asp-538. Ala-546 provides a ligand contact to substrate. Met-548 contributes to the FAD binding site.

Belongs to the carotenoid/retinoid oxidoreductase family. As to quaternary structure, homotetramer. It depends on FAD as a cofactor.

Its subcellular location is the plastid. It localises to the chloroplast. It is found in the chromoplast. The protein localises to the membrane. The enzyme catalyses 2 a plastoquinone + 15-cis-phytoene = 9,9',15-tri-cis-zeta-carotene + 2 a plastoquinol. It participates in carotenoid biosynthesis; lycopene biosynthesis. Its function is as follows. Converts phytoene into zeta-carotene via the intermediary of phytofluene by the symmetrical introduction of two double bonds at the C-11 and C-11' positions of phytoene with a concomitant isomerization of two neighboring double bonds at the C9 and C9' positions from trans to cis. The polypeptide is 15-cis-phytoene desaturase, chloroplastic/chromoplastic (PDS) (Solanum lycopersicum (Tomato)).